A 324-amino-acid polypeptide reads, in one-letter code: GTP cyclohydrolase 1 (324 aa).

Disordered regions lie at residues 33-59 (GRNN…NQAE) and 79-119 (VPLA…TPGH). Residues 40–49 (STSSTSGTSS) are compositionally biased toward low complexity. 2 stretches are compositionally biased toward polar residues: residues 50–59 (LADRQQNQAE) and 93–117 (TNGS…STTP). The Zn(2+) site is built by Cys-214, His-217, and Cys-285.

It belongs to the GTP cyclohydrolase I family. In terms of assembly, toroid-shaped homodecamer, composed of two pentamers of five dimers. In terms of tissue distribution, isoform B is expressed almost exclusively in adult heads.

It catalyses the reaction GTP + H2O = 7,8-dihydroneopterin 3'-triphosphate + formate + H(+). The protein operates within cofactor biosynthesis; 7,8-dihydroneopterin triphosphate biosynthesis; 7,8-dihydroneopterin triphosphate from GTP: step 1/1. Its function is as follows. Isoform B is required for eye pigment production, Isoform C may be required for normal embryonic development and segment pattern formation. This is GTP cyclohydrolase 1 (Pu) from Drosophila melanogaster (Fruit fly).